Consider the following 380-residue polypeptide: Cytochrome b (380 aa).

The next 4 membrane-spanning stretches (helical) occupy residues 34–54 (FGSL…FLAM), 78–99 (WLLR…YFHI), 114–134 (WNIG…GYVL), and 179–199 (FFTF…INLL). Residues His-84 and His-98 each contribute to the heme b site. His-183 contacts heme b. His-202 provides a ligand contact to a ubiquinone. Transmembrane regions (helical) follow at residues 227-247 (YKDL…STFA), 289-309 (LGGV…PIIH), 321-341 (IAKT…WIGG), and 348-368 (FITI…LLIP).

The protein belongs to the cytochrome b family. As to quaternary structure, the cytochrome bc1 complex contains 3 respiratory subunits (MT-CYB, CYC1 and UQCRFS1), 2 core proteins (UQCRC1 and UQCRC2) and probably 6 low-molecular weight proteins. The cofactor is heme b.

It localises to the mitochondrion inner membrane. Functionally, component of the ubiquinol-cytochrome c reductase complex (complex III or cytochrome b-c1 complex) that is part of the mitochondrial respiratory chain. The b-c1 complex mediates electron transfer from ubiquinol to cytochrome c. Contributes to the generation of a proton gradient across the mitochondrial membrane that is then used for ATP synthesis. This Pelophylax plancyi (Korean pond frog) protein is Cytochrome b (mt-cyb).